Consider the following 172-residue polypeptide: Transcriptional regulator TAC1 (172 aa).

The disordered stretch occupies residues 1–28; it reads MENIKNPKNADDCSDSISKNSHQGVDDS. A compositionally biased stretch (polar residues) spans 15 to 28; it reads DSISKNSHQGVDDS. Residues 35–57 form a C2H2-type zinc finger; sequence YVCSFCIRGFSNAQALGGHMNIH. Positions 156-160 match the EAR-like (transcriptional repression) motif; it reads LDLEL.

In terms of tissue distribution, preferentially expressed in roots and flowers. Slightly expressed in leaves and stems.

Its subcellular location is the nucleus. Functionally, activation factor which mediates telomerase activity and potentiates responses to auxin through the regulation of BT2. Binds in vitro to the DNA sequence 5'-GACAGTGTTAC-3' of the BT2 promoter. This Arabidopsis thaliana (Mouse-ear cress) protein is Transcriptional regulator TAC1 (TAC1).